The sequence spans 236 residues: Phosphoribosylaminoimidazole-succinocarboxamide synthase (236 aa).

This sequence belongs to the SAICAR synthetase family.

The catalysed reaction is 5-amino-1-(5-phospho-D-ribosyl)imidazole-4-carboxylate + L-aspartate + ATP = (2S)-2-[5-amino-1-(5-phospho-beta-D-ribosyl)imidazole-4-carboxamido]succinate + ADP + phosphate + 2 H(+). It participates in purine metabolism; IMP biosynthesis via de novo pathway; 5-amino-1-(5-phospho-D-ribosyl)imidazole-4-carboxamide from 5-amino-1-(5-phospho-D-ribosyl)imidazole-4-carboxylate: step 1/2. The protein is Phosphoribosylaminoimidazole-succinocarboxamide synthase (purC) of Lactococcus lactis subsp. lactis (strain IL1403) (Streptococcus lactis).